Consider the following 1067-residue polypeptide: MNSMDRHIQQTNDRLQCIKQHLQNPANFHNAATELLDWCGDPRAFQRPFEQSLMGCLTVVSRVAAQQGFDLDLGYRLLAVCAANRDKFTPKSAALLSSWCEELGRLLLLRHQKSRQSDPPGKLPMQPPLSSMSSMKPTLSHSDGSFPYDSVPWQQNTNQPPGSLSVVTTVWGVTNTSQSQVLGNPMANANNPMNPGGNPMASGMTTSNPGLNSPQFAGQQQQFSAKAGPAQPYIQQSMYGRPNYPGSGGFGASYPGGPNAPAGMGIPPHTRPPADFTQPAAAAAAAAVAAAAATATATATATVAALQETQNKDINQYGPMGPTQAYNSQFMNQPGPRGPASMGGSMNPASMAAGMTPSGMSGPPMGMNQPRPPGISPFGTHGQRMPQQTYPGPRPQSLPIQNIKRPYPGEPNYGNQQYGPNSQFPTQPGQYPAPNPPRPLTSPNYPGQRMPSQPSSGQYPPPTVNMGQYYKPEQFNGQNNTFSGSSYSNYSQGNVNRPPRPVPVANYPHSPVPGNPTPPMTPGSSIPPYLSPSQDVKPPFPPDIKPNMSALPPPPANHNDELRLTFPVRDGVVLEPFRLEHNLAVSNHVFHLRPTVHQTLMWRSDLELQFKCYHHEDRQMNTNWPASVQVSVNATPLTIERGDNKTSHKPLHLKHVCQPGRNTIQITVTACCCSHLFVLQLVHRPSVRSVLQGLLKKRLLPAEHCITKIKRNFSSVAASSGNTTLNGEDGVEQTAIKVSLKCPITFRRIQLPARGHDCKHVQCFDLESYLQLNCERGTWRCPVCNKTALLEGLEVDQYMWGILNAIQHSEFEEVTIDPTCSWRPVPIKSDLHIKDDPDGIPSKRFKTMSPSQMIMPNVMEMIAALGPGPSPYPLPPPPGGTNSNDYSSQGNNYQGHGNFDFPHGNPGGTSMNDFMHGPPQLSHPPDMPNNMAALEKPLSHPMQETMPHAGSSDQPHPSIQQGLHVPHPSSQSGPPLHHSGAPPPPPSQPPRQPPQAAPSSHPHSDLTFNPSSALEGQAGAQGASDMPEPSLDLLPELTNPDELLSYLDPPDLPSNSNDDLLSLFENN.

The sufficient for transactivation activity; sufficient for interaction with NOTCH1 stretch occupies residues 1 to 120; that stretch reads MNSMDRHIQQ…HQKSRQSDPP (120 aa). A Glycyl lysine isopeptide (Lys-Gly) (interchain with G-Cter in SUMO2) cross-link involves residue K91. Disordered regions lie at residues 112–141 and 327–542; these read QKSRQSDPPGKLPMQPPLSSMSSMKPTLSH and NSQF…PFPP. The segment covering 128–141 has biased composition (low complexity); the sequence is PLSSMSSMKPTLSH. Residues 413-429 show a composition bias toward polar residues; the sequence is YGNQQYGPNSQFPTQPG. Residues 431–440 are compositionally biased toward pro residues; it reads YPAPNPPRPL. Residues 479-497 show a composition bias toward low complexity; the sequence is NNTFSGSSYSNYSQGNVNR. A compositionally biased stretch (pro residues) spans 510-521; that stretch reads SPVPGNPTPPMT. The SP-RING-type zinc finger occupies 727–808; it reads GEDGVEQTAI…MWGILNAIQH (82 aa). 4 residues coordinate Zn(2+): C758, H760, C781, and C784. Residues K834 and K843 each participate in a glycyl lysine isopeptide (Lys-Gly) (interchain with G-Cter in SUMO2) cross-link. The tract at residues 837-1067 is transactivation domain; it reads PDGIPSKRFK…DDLLSLFENN (231 aa). Over residues 868–879 the composition is skewed to pro residues; that stretch reads GPSPYPLPPPPG. Residues 868-1067 form a disordered region; that stretch reads GPSPYPLPPP…DDLLSLFENN (200 aa). 2 stretches are compositionally biased toward polar residues: residues 881–895 and 951–961; these read TNSNDYSSQGNNYQG and SSDQPHPSIQQ. The segment covering 981–996 has biased composition (pro residues); sequence APPPPPSQPPRQPPQA. The span at 1040 to 1067 shows a compositional bias: low complexity; sequence PDELLSYLDPPDLPSNSNDDLLSLFENN.

Interacts with AR, but not with ESR1, NR3C1, PGR, THRB nor VDR. Interacts with NOTCH1 and RBPJ. Interacts with SMARCA4. Interacts (via SP-RING-type domain) with SMAD3 and SMAD4 (via MH2 domain). Expressed most abundantly in ovary and, at lower levels, in prostate, spleen and testis. Weak expression, if any, in thymus, small intestine, colon and peripheral blood leukocytes.

The protein resides in the nucleus. The protein localises to the nucleoplasm. It is found in the cytoplasm. In terms of biological role, acts as a transcriptional coactivator. Increases ligand-dependent transcriptional activity of AR and promotes AR sumoylation. The stimulation of AR activity is dependent upon sumoylation. Also functions as a transcriptional coactivator in the TGF-beta signaling pathway by increasing the activity of the SMAD3/SMAD4 transcriptional complex. Involved in transcriptional activation of a subset of NOTCH1 target genes including MYC. Involved in thymocyte and T cell development. Involved in the regulation of postmitotic positioning of pyramidal neurons in the developing cerebral cortex. This is Zinc finger MIZ domain-containing protein 1 from Homo sapiens (Human).